The chain runs to 264 residues: 3-methyl-2-oxobutanoate hydroxymethyltransferase (264 aa).

Mg(2+)-binding residues include Asp-46 and Asp-85. 3-methyl-2-oxobutanoate contacts are provided by residues 46 to 47 (DS), Asp-85, and Lys-113. Glu-115 contacts Mg(2+). Residue Glu-181 is the Proton acceptor of the active site.

Belongs to the PanB family. In terms of assembly, homodecamer; pentamer of dimers. The cofactor is Mg(2+).

It is found in the cytoplasm. It catalyses the reaction 3-methyl-2-oxobutanoate + (6R)-5,10-methylene-5,6,7,8-tetrahydrofolate + H2O = 2-dehydropantoate + (6S)-5,6,7,8-tetrahydrofolate. Its pathway is cofactor biosynthesis; (R)-pantothenate biosynthesis; (R)-pantoate from 3-methyl-2-oxobutanoate: step 1/2. Its function is as follows. Catalyzes the reversible reaction in which hydroxymethyl group from 5,10-methylenetetrahydrofolate is transferred onto alpha-ketoisovalerate to form ketopantoate. The polypeptide is 3-methyl-2-oxobutanoate hydroxymethyltransferase (Salmonella typhi).